Here is a 1128-residue protein sequence, read N- to C-terminus: Nck-associated protein 1 (1128 aa).

S2 carries the N-acetylserine modification. The tract at residues 640–665 (AVNKKSKKQTGKKGEPEREKPGVESM) is disordered. Over residues 651-665 (KKGEPEREKPGVESM) the composition is skewed to basic and acidic residues. A helical membrane pass occupies residues 995–1015 (IACLLMVFVAVSLPTLASNVM).

This sequence belongs to the HEM-1/HEM-2 family. Component of the WAVE1 complex composed of ABI2, CYFIP1 or CYFIP2, BRK1, NCKAP1 and WASF1/WAVE1. Within the complex, a heterodimer containing NCKAP1 and CYFIP1 interacts with a heterotrimer formed by WAVE1, ABI2 and BRK1. Component of the WAVE2 complex composed of ABI1, CYFIP1/SRA1, NCKAP1/NAP1 and WASF2/WAVE2. CYFIP2 binds to activated RAC1 which causes the complex to dissociate, releasing activated WASF1. The complex can also be activated by NCK1. Associates preferentially with the first SH3 domain of NCK. Interacts with NYAP1, NYAP2 and MYO16. Interacts with TMEM132D. Preferentially expressed in brain, heart, liver and testis.

Its subcellular location is the cell membrane. It localises to the cell projection. The protein localises to the lamellipodium membrane. Functionally, part of the WAVE complex that regulates lamellipodia formation. The WAVE complex regulates actin filament reorganization via its interaction with the Arp2/3 complex. Actin remodeling activity is regulated by RAC1. As component of the WAVE1 complex, required for BDNF-NTRK2 endocytic trafficking and signaling from early endosomes. This chain is Nck-associated protein 1 (Nckap1), found in Rattus norvegicus (Rat).